We begin with the raw amino-acid sequence, 109 residues long: Large ribosomal subunit protein uL24 (109 aa).

It belongs to the universal ribosomal protein uL24 family. Part of the 50S ribosomal subunit.

Its function is as follows. One of two assembly initiator proteins, it binds directly to the 5'-end of the 23S rRNA, where it nucleates assembly of the 50S subunit. Functionally, one of the proteins that surrounds the polypeptide exit tunnel on the outside of the subunit. In Legionella pneumophila (strain Paris), this protein is Large ribosomal subunit protein uL24.